A 177-amino-acid chain; its full sequence is FANCD2 opposite strand protein (177 aa).

The sequence is that of FANCD2 opposite strand protein (FANCD2OS) from Homo sapiens (Human).